A 236-amino-acid chain; its full sequence is Demethylmenaquinone methyltransferase (236 aa).

Residues T58, D79, and N106 to A107 contribute to the S-adenosyl-L-methionine site.

Belongs to the class I-like SAM-binding methyltransferase superfamily. MenG/UbiE family.

It carries out the reaction a 2-demethylmenaquinol + S-adenosyl-L-methionine = a menaquinol + S-adenosyl-L-homocysteine + H(+). It functions in the pathway quinol/quinone metabolism; menaquinone biosynthesis; menaquinol from 1,4-dihydroxy-2-naphthoate: step 2/2. In terms of biological role, methyltransferase required for the conversion of demethylmenaquinol (DMKH2) to menaquinol (MKH2). This chain is Demethylmenaquinone methyltransferase, found in Listeria welshimeri serovar 6b (strain ATCC 35897 / DSM 20650 / CCUG 15529 / CIP 8149 / NCTC 11857 / SLCC 5334 / V8).